Reading from the N-terminus, the 162-residue chain is MIHFVLLVSRQGKVRLTKWYSPYAQKERSKVIRELSGVILNRGPKLCNFVEWRGYKVVYKRYASLYFCMCIDQEDNELEVLEIIHHYVEILDRYFGSVCELDLIFNFHKAYYILDELLIAGELQESSKKTVARIISAQDQLVEVAKEEASSISNIIAQATNR.

The protein belongs to the adaptor complexes small subunit family. In terms of assembly, adaptor protein complex 1 (AP-1) is a heterotetramer composed of two large adaptins (gamma-type subunit and beta-type subunit), a medium adaptin (mu-type subunit) and a small adaptin (sigma-type subunit). As to expression, expressed in roots, stems, leaves, flowers and siliques (developing fruits and seeds).

The protein resides in the golgi apparatus. It localises to the cytoplasmic vesicle. It is found in the clathrin-coated vesicle membrane. Its function is as follows. Subunit of clathrin-associated adaptor protein complex 1 that plays a role in protein sorting at the trans-Golgi network and early endosomes (TGN/EE). The AP complexes mediate the recruitment of clathrin to membranes and the recognition of sorting signals within the cytosolic tails of transmembrane cargo molecules. The chain is AP-1 complex subunit sigma-2 (AAP19-2) from Arabidopsis thaliana (Mouse-ear cress).